The chain runs to 314 residues: Putative methylthioribose-1-phosphate isomerase (314 aa).

Substrate-binding positions include 45–47 (RGA), R79, and Q177. Catalysis depends on D218, which acts as the Proton donor. 227–228 (NK) contributes to the substrate binding site.

It belongs to the eIF-2B alpha/beta/delta subunits family. MtnA subfamily.

The catalysed reaction is 5-(methylsulfanyl)-alpha-D-ribose 1-phosphate = 5-(methylsulfanyl)-D-ribulose 1-phosphate. In terms of biological role, catalyzes the interconversion of methylthioribose-1-phosphate (MTR-1-P) into methylthioribulose-1-phosphate (MTRu-1-P). The chain is Putative methylthioribose-1-phosphate isomerase from Methanosphaera stadtmanae (strain ATCC 43021 / DSM 3091 / JCM 11832 / MCB-3).